The primary structure comprises 638 residues: RNA exonuclease 3 (638 aa).

Positions 37–136 (AQDQVLEQKE…PPRRAPKEAL (100 aa)) are disordered. Residues 55 to 76 (LKLEPRPEAKETPKDDLRHVSD) show a composition bias toward basic and acidic residues. Residues 77 to 111 (SGRSTPVKKTTAPATNAENISPVSRQPNIPKNTAT) show a composition bias toward polar residues. The region spanning 408-584 (ICFDCEMGYT…VEDALATGDL (177 aa)) is the Exonuclease domain. Polar residues predominate over residues 612–622 (DSSSNTVSMQT). Residues 612 to 638 (DSSSNTVSMQTKLGEGAGAKRAREGTS) are disordered.

This sequence belongs to the REXO1/REXO3 family.

The protein localises to the cytoplasm. The protein resides in the nucleus. 3' to 5' exoribonuclease required for proper 3' end maturation of MRP RNA and of the U5L snRNA. This chain is RNA exonuclease 3 (rex3), found in Emericella nidulans (strain FGSC A4 / ATCC 38163 / CBS 112.46 / NRRL 194 / M139) (Aspergillus nidulans).